The following is a 301-amino-acid chain: tRNA-cytidine(32) 2-sulfurtransferase (301 aa).

The PP-loop motif signature appears at Ser-55–Ser-60. [4Fe-4S] cluster is bound by residues Cys-130, Cys-133, and Cys-221.

The protein belongs to the TtcA family. In terms of assembly, homodimer. Mg(2+) serves as cofactor. The cofactor is [4Fe-4S] cluster.

The protein resides in the cytoplasm. The enzyme catalyses cytidine(32) in tRNA + S-sulfanyl-L-cysteinyl-[cysteine desulfurase] + AH2 + ATP = 2-thiocytidine(32) in tRNA + L-cysteinyl-[cysteine desulfurase] + A + AMP + diphosphate + H(+). Its pathway is tRNA modification. Functionally, catalyzes the ATP-dependent 2-thiolation of cytidine in position 32 of tRNA, to form 2-thiocytidine (s(2)C32). The sulfur atoms are provided by the cysteine/cysteine desulfurase (IscS) system. The chain is tRNA-cytidine(32) 2-sulfurtransferase from Acinetobacter baumannii (strain AB307-0294).